Reading from the N-terminus, the 622-residue chain is Probable Xaa-Pro aminopeptidase P (622 aa).

Positions 419, 430, 528, and 542 each coordinate Mn(2+).

The protein belongs to the peptidase M24B family. Requires Mn(2+) as cofactor.

The enzyme catalyses Release of any N-terminal amino acid, including proline, that is linked to proline, even from a dipeptide or tripeptide.. In terms of biological role, catalyzes the removal of a penultimate prolyl residue from the N-termini of peptides. The chain is Probable Xaa-Pro aminopeptidase P (AMPP) from Coprinopsis cinerea (strain Okayama-7 / 130 / ATCC MYA-4618 / FGSC 9003) (Inky cap fungus).